The chain runs to 372 residues: Aminomethyltransferase (372 aa).

It belongs to the GcvT family. As to quaternary structure, the glycine cleavage system is composed of four proteins: P, T, L and H.

The catalysed reaction is N(6)-[(R)-S(8)-aminomethyldihydrolipoyl]-L-lysyl-[protein] + (6S)-5,6,7,8-tetrahydrofolate = N(6)-[(R)-dihydrolipoyl]-L-lysyl-[protein] + (6R)-5,10-methylene-5,6,7,8-tetrahydrofolate + NH4(+). Functionally, the glycine cleavage system catalyzes the degradation of glycine. This Prochlorococcus marinus (strain NATL1A) protein is Aminomethyltransferase.